A 298-amino-acid chain; its full sequence is uncharacterized protein (298 aa).

10 helical membrane-spanning segments follow: residues 5-25 (ILFG…MSAF), 36-56 (MENV…IYPF), 76-96 (VVVG…ISLA), 97-117 (TATA…PLLL), 124-144 (SALI…DPSV), 147-167 (VGLV…LAYI), 181-201 (VILA…FIDI), 216-236 (ILWI…LTYA), 244-264 (IIAP…LYLG), and 272-292 (SSLG…PALL). In terms of domain architecture, EamA 1 spans 17–141 (LCFGIMSAFV…GLVGVVLISD (125 aa)). The 106-residue stretch at 183–288 (LAFAFGMSLL…ILCSGLLIAL (106 aa)) folds into the EamA 2 domain.

Belongs to the EamA transporter family.

The protein resides in the cell membrane. This is an uncharacterized protein from Helicobacter pylori (strain J99 / ATCC 700824) (Campylobacter pylori J99).